The following is a 113-amino-acid chain: U11-theraphotoxin-Hhn1l (113 aa).

A signal peptide spans methionine 1–alanine 21. A propeptide spanning residues aspartate 22–arginine 74 is cleaved from the precursor. Intrachain disulfides connect cysteine 82–cysteine 95 and cysteine 89–cysteine 110.

This sequence belongs to the neurotoxin 14 (magi-1) family. 01 (HNTX-16) subfamily. Expressed by the venom gland.

It is found in the secreted. In terms of biological role, probable ion channel inhibitor. This is U11-theraphotoxin-Hhn1l from Cyriopagopus hainanus (Chinese bird spider).